A 402-amino-acid chain; its full sequence is Ketol-acid reductoisomerase, mitochondrial (402 aa).

The transit peptide at 1-26 (MAARNCTKALRPLARQLATPAVQRRT) directs the protein to the mitochondrion. The KARI N-terminal Rossmann domain occupies 63 to 252 (KEEVHERADW…AVGSGYLYET (190 aa)). Residues 90–99 (GYGSQGHGQG), 114–119 (RKNGKS), and 152–156 (SDAAQ) each bind NADP(+). The active site involves H177. The region spanning 253 to 400 (TFEKEVYSDL…KAVRSLRPEN (148 aa)) is the KARI C-terminal knotted domain. Mg(2+) is bound by residues D261, E265, E297, and E301. S323 provides a ligand contact to substrate.

It belongs to the ketol-acid reductoisomerase family. Mg(2+) is required as a cofactor.

The protein localises to the mitochondrion. The enzyme catalyses (2R)-2,3-dihydroxy-3-methylbutanoate + NADP(+) = (2S)-2-acetolactate + NADPH + H(+). It catalyses the reaction (2R,3R)-2,3-dihydroxy-3-methylpentanoate + NADP(+) = (S)-2-ethyl-2-hydroxy-3-oxobutanoate + NADPH + H(+). It participates in amino-acid biosynthesis; L-isoleucine biosynthesis; L-isoleucine from 2-oxobutanoate: step 2/4. The protein operates within amino-acid biosynthesis; L-valine biosynthesis; L-valine from pyruvate: step 2/4. The sequence is that of Ketol-acid reductoisomerase, mitochondrial (ilv-2) from Neurospora crassa (strain ATCC 24698 / 74-OR23-1A / CBS 708.71 / DSM 1257 / FGSC 987).